The following is a 250-amino-acid chain: Ubiquitin-conjugating enzyme E2 6 (250 aa).

The Cytoplasmic portion of the chain corresponds to 1–232 (MATKQAHKRL…DGKEPNDSSS (232 aa)). One can recognise a UBC core domain in the interval 5–167 (QAHKRLTKEY…VQENVETLEK (163 aa)). Cysteine 87 acts as the Glycyl thioester intermediate in catalysis. A Phosphoserine modification is found at serine 139. Threonine 178 bears the Phosphothreonine mark. The interval 209–229 (AEQALRQSENNSKKDGKEPND) is disordered. Basic and acidic residues predominate over residues 219 to 228 (NSKKDGKEPN). A helical transmembrane segment spans residues 233–249 (MVYIGIAIFLFLVGLFM).

Belongs to the ubiquitin-conjugating enzyme family.

The protein resides in the endoplasmic reticulum membrane. The enzyme catalyses S-ubiquitinyl-[E1 ubiquitin-activating enzyme]-L-cysteine + [E2 ubiquitin-conjugating enzyme]-L-cysteine = [E1 ubiquitin-activating enzyme]-L-cysteine + S-ubiquitinyl-[E2 ubiquitin-conjugating enzyme]-L-cysteine.. It participates in protein modification; protein ubiquitination. Functionally, catalyzes the covalent attachment of ubiquitin to other proteins. Functions in degradation of misfolded or regulated proteins localized in the endoplasmic reticulum (ER) lumen or membrane via the ubiquitin-proteasome system. Cognate E2 conjugating enzyme for the DOA10 ubiquitin ligase complex, which is part of the ERAD-C pathway responsible for the rapid degradation of membrane proteins with misfolded cytoplasmic domains. The chain is Ubiquitin-conjugating enzyme E2 6 (UBC6) from Saccharomyces cerevisiae (strain ATCC 204508 / S288c) (Baker's yeast).